Reading from the N-terminus, the 165-residue chain is Phosphopantetheine adenylyltransferase (165 aa).

Residue threonine 11 coordinates substrate. Residues 11–12 and histidine 19 each bind ATP; that span reads TF. Lysine 43, threonine 79, and arginine 93 together coordinate substrate. Residues glutamate 104 and 128–134 each bind ATP; that span reads LEPLNST.

The protein belongs to the bacterial CoaD family. As to quaternary structure, homohexamer. It depends on Mg(2+) as a cofactor.

The protein localises to the cytoplasm. The enzyme catalyses (R)-4'-phosphopantetheine + ATP + H(+) = 3'-dephospho-CoA + diphosphate. The protein operates within cofactor biosynthesis; coenzyme A biosynthesis; CoA from (R)-pantothenate: step 4/5. In terms of biological role, reversibly transfers an adenylyl group from ATP to 4'-phosphopantetheine, yielding dephospho-CoA (dPCoA) and pyrophosphate. The protein is Phosphopantetheine adenylyltransferase of Lactococcus lactis subsp. lactis (strain IL1403) (Streptococcus lactis).